The primary structure comprises 345 residues: Biotin synthase (345 aa).

The Radical SAM core domain maps to 38–256 (GEVQVSTLLS…IAVARIMMPR (219 aa)). Positions 53, 57, and 60 each coordinate [4Fe-4S] cluster. The [2Fe-2S] cluster site is built by Cys97, Cys128, Cys188, and Arg260.

Belongs to the radical SAM superfamily. Biotin synthase family. In terms of assembly, homodimer. [4Fe-4S] cluster serves as cofactor. [2Fe-2S] cluster is required as a cofactor.

It carries out the reaction (4R,5S)-dethiobiotin + (sulfur carrier)-SH + 2 reduced [2Fe-2S]-[ferredoxin] + 2 S-adenosyl-L-methionine = (sulfur carrier)-H + biotin + 2 5'-deoxyadenosine + 2 L-methionine + 2 oxidized [2Fe-2S]-[ferredoxin]. Its pathway is cofactor biosynthesis; biotin biosynthesis; biotin from 7,8-diaminononanoate: step 2/2. Functionally, catalyzes the conversion of dethiobiotin (DTB) to biotin by the insertion of a sulfur atom into dethiobiotin via a radical-based mechanism. The sequence is that of Biotin synthase from Sodalis glossinidius (strain morsitans).